A 151-amino-acid polypeptide reads, in one-letter code: Ribosome maturation factor RimP (151 aa).

This sequence belongs to the RimP family.

The protein localises to the cytoplasm. Required for maturation of 30S ribosomal subunits. The chain is Ribosome maturation factor RimP from Shewanella baltica (strain OS223).